The chain runs to 677 residues: DNA ligase (677 aa).

Residues 35–39 (DAEYD), 84–85 (SL), and Glu116 contribute to the NAD(+) site. The active-site N6-AMP-lysine intermediate is the Lys118. 4 residues coordinate NAD(+): Arg139, Glu176, Lys295, and Lys319. 4 residues coordinate Zn(2+): Cys413, Cys416, Cys431, and Cys437. A BRCT domain is found at 596–677 (LDELPLAGQV…MLAMFADLEG (82 aa)).

This sequence belongs to the NAD-dependent DNA ligase family. LigA subfamily. Mg(2+) serves as cofactor. It depends on Mn(2+) as a cofactor.

It catalyses the reaction NAD(+) + (deoxyribonucleotide)n-3'-hydroxyl + 5'-phospho-(deoxyribonucleotide)m = (deoxyribonucleotide)n+m + AMP + beta-nicotinamide D-nucleotide.. Functionally, DNA ligase that catalyzes the formation of phosphodiester linkages between 5'-phosphoryl and 3'-hydroxyl groups in double-stranded DNA using NAD as a coenzyme and as the energy source for the reaction. It is essential for DNA replication and repair of damaged DNA. This Pseudoalteromonas atlantica (strain T6c / ATCC BAA-1087) protein is DNA ligase.